Consider the following 376-residue polypeptide: 1-deoxy-D-xylulose 5-phosphate reductoisomerase (376 aa).

6 residues coordinate NADPH: T12, G13, S14, I15, N39, and N116. K117 contacts 1-deoxy-D-xylulose 5-phosphate. E118 contacts NADPH. D142 contributes to the Mn(2+) binding site. 1-deoxy-D-xylulose 5-phosphate is bound by residues S143, E144, S164, and H187. Mn(2+) is bound at residue E144. G193 serves as a coordination point for NADPH. 1-deoxy-D-xylulose 5-phosphate contacts are provided by S200, N205, K206, and E209. Mn(2+) is bound at residue E209.

This sequence belongs to the DXR family. Mg(2+) serves as cofactor. The cofactor is Mn(2+).

The catalysed reaction is 2-C-methyl-D-erythritol 4-phosphate + NADP(+) = 1-deoxy-D-xylulose 5-phosphate + NADPH + H(+). The protein operates within isoprenoid biosynthesis; isopentenyl diphosphate biosynthesis via DXP pathway; isopentenyl diphosphate from 1-deoxy-D-xylulose 5-phosphate: step 1/6. Functionally, catalyzes the NADPH-dependent rearrangement and reduction of 1-deoxy-D-xylulose-5-phosphate (DXP) to 2-C-methyl-D-erythritol 4-phosphate (MEP). The protein is 1-deoxy-D-xylulose 5-phosphate reductoisomerase of Thermotoga maritima (strain ATCC 43589 / DSM 3109 / JCM 10099 / NBRC 100826 / MSB8).